Reading from the N-terminus, the 476-residue chain is MIYNMSTELFSTLPYKVADITLADFGRKEIDLAEKEMPGLMALREKYGESKPLKGARIMGSLHMTIQTAVLIETLVALGAEVRWCSCNIYSTQDHAAAAIAASGVAVFAWKGENLADYWWCTLQALNFPGGKGPNVIVDDGGDATMMIHVGYDAENDAAVLDKEVHAEDEIELNAILKKVLAEDKTRWHRVAEEMRGVSEETTTGVHRLYQMQEEGKLLFPAFNVNDSVTKSKFDNLYGCRESLADGIKRATDVMIAGKVVVVCGYGDVGKGCSHSMRSYGARVLVTEVDPICALQAAMEGFEVVTMEDACTEGNIFVTTTGNIDIIRIDHMEKMKDQAIVCNIGHFDNEIQVDALKHYSGIKCVNIKPQVDRYYFPDGHSILLLADGRLVNLGCATGHPSFVMSNSFTNQTLAQIELFNKKYEVNVYRLPKHLDEEVARLHLEKIGVKLTKLTPEQAAYIGVSVDGPYKAEHYRY.

Substrate is bound by residues threonine 65, aspartate 140, and glutamate 201. 202 to 204 contributes to the NAD(+) binding site; it reads TTT. The substrate site is built by lysine 231 and aspartate 235. NAD(+)-binding positions include asparagine 236, 265 to 270, glutamate 288, asparagine 323, 344 to 346, and asparagine 392; these read GYGDVG and IGH.

It belongs to the adenosylhomocysteinase family. The cofactor is NAD(+).

The protein localises to the cytoplasm. The enzyme catalyses S-adenosyl-L-homocysteine + H2O = L-homocysteine + adenosine. The protein operates within amino-acid biosynthesis; L-homocysteine biosynthesis; L-homocysteine from S-adenosyl-L-homocysteine: step 1/1. In terms of biological role, may play a key role in the regulation of the intracellular concentration of adenosylhomocysteine. In Bacteroides thetaiotaomicron (strain ATCC 29148 / DSM 2079 / JCM 5827 / CCUG 10774 / NCTC 10582 / VPI-5482 / E50), this protein is Adenosylhomocysteinase.